The following is an 878-amino-acid chain: Ecdysone receptor (878 aa).

Disordered regions lie at residues 1-27 and 209-254; these read MKRRWSNNGGFMRLPEESSSEVTSSSN and GLGM…SKKG. Positions 1–263 are modulating; it reads MKRRWSNNGG…GPAPRVQEEL (263 aa). 2 consecutive NR C4-type zinc fingers follow at residues 264–284 and 300–324; these read CLVCGDRASGYHYNALTCEGC and CKFGRACEMDMYMRRKCQECRLKKC. The segment at residues 264 to 336 is a DNA-binding region (nuclear receptor); it reads CLVCGDRASG…VGMRPECVVP (73 aa). Positions 344–374 are disordered; the sequence is RREKKAQKEKDKMTTSPSSQHGGNGSLASGG. The span at 365 to 374 shows a compositional bias: gly residues; sequence GGNGSLASGG. The 236-residue stretch at 419–654 folds into the NR LBD domain; it reads NQLAVIYKLI…FLEEIWDVHA (236 aa). Composition is skewed to low complexity over residues 698–709 and 728–759; these read TSAAAAAAQHQP and QTQPQLQPQLPPQLQGQLQPQLQPQLQTQLQP. Residues 698–759 are disordered; sequence TSAAAAAAQH…QPQLQTQLQP (62 aa).

The protein belongs to the nuclear hormone receptor family. NR1 subfamily. Heterodimer of USP and ECR. Only the heterodimer is capable of high-affinity binding to ecdysone. Interacts with trr in an ecdysone-dependent manner. Upon ecdysone stimulation, interacts with Nup98. In terms of tissue distribution, isoform B1 predominates over isoform A in larval tissues, imaginal histoblast nests and midgut islands. Isoform A predominates over B1 in imaginal disks, and the larval prothoracic gland.

It is found in the nucleus. In terms of biological role, receptor for ecdysone. Binds to ecdysone response elements (ECRES) following ecdysone-binding, and recruitment of a complex containing the histone methyltransferase trr, leads to activate transcription of target genes. The polypeptide is Ecdysone receptor (EcR) (Drosophila melanogaster (Fruit fly)).